Reading from the N-terminus, the 405-residue chain is Coenzyme F420 hydrogenase subunit alpha (405 aa).

Ni(2+)-binding residues include C63, C66, C380, and C383.

Belongs to the [NiFe]/[NiFeSe] hydrogenase large subunit family. As to quaternary structure, heterocomplex of the form (alpha(1)beta(1)gamma(1))(8). Ni(2+) serves as cofactor. Iron-sulfur cluster is required as a cofactor. It depends on FAD as a cofactor.

It carries out the reaction oxidized coenzyme F420-(gamma-L-Glu)(n) + H2 + H(+) = reduced coenzyme F420-(gamma-L-Glu)(n). Its function is as follows. Reduces the physiological low-potential two-electron acceptor coenzyme F420, and the artificial one-electron acceptor methylviologen. The polypeptide is Coenzyme F420 hydrogenase subunit alpha (frhA) (Methanothermobacter thermautotrophicus (strain ATCC 29096 / DSM 1053 / JCM 10044 / NBRC 100330 / Delta H) (Methanobacterium thermoautotrophicum)).